Consider the following 488-residue polypeptide: Glutamyl-tRNA(Gln) amidotransferase subunit A (488 aa).

Catalysis depends on charge relay system residues Lys77 and Ser152. Ser176 acts as the Acyl-ester intermediate in catalysis.

Belongs to the amidase family. GatA subfamily. Heterotrimer of A, B and C subunits.

It catalyses the reaction L-glutamyl-tRNA(Gln) + L-glutamine + ATP + H2O = L-glutaminyl-tRNA(Gln) + L-glutamate + ADP + phosphate + H(+). In terms of biological role, allows the formation of correctly charged Gln-tRNA(Gln) through the transamidation of misacylated Glu-tRNA(Gln) in organisms which lack glutaminyl-tRNA synthetase. The reaction takes place in the presence of glutamine and ATP through an activated gamma-phospho-Glu-tRNA(Gln). The sequence is that of Glutamyl-tRNA(Gln) amidotransferase subunit A from Streptococcus pyogenes serotype M28 (strain MGAS6180).